Here is a 373-residue protein sequence, read N- to C-terminus: Secondary metabolism regulator laeA (373 aa).

Disordered stretches follow at residues 1 to 21 (MFLN…PLNV) and 53 to 81 (AAER…NPDR). Residues 67 to 77 (GSPSINSTSSK) are compositionally biased toward polar residues.

It belongs to the methyltransferase superfamily. LaeA methyltransferase family. Component of the heterotrimeric velvet complex composed of laeA, veA and velB; VeA acting as a bridging protein between laeA and velB.

The protein resides in the nucleus. The catalysed reaction is L-methionyl-[protein] + S-adenosyl-L-methionine = S-methyl-L-methionyl-[protein] + S-adenosyl-L-homocysteine. In terms of biological role, methyltransferase that performs automethylation. No other methyl-accepting substrate has been identified yet. Component of the velvet transcription factor complex that acts as a global regulator for secondary metabolite gene expression. Controls the expression of the cyclopiazonic acid (CPA) gene clusters. Regulates also pigmentation and conidial head morphology. The sequence is that of Secondary metabolism regulator laeA from Aspergillus fumisynnematus.